An 873-amino-acid polypeptide reads, in one-letter code: uncharacterized protein (873 aa).

Disordered regions lie at residues 1 to 24, 175 to 251, 375 to 423, 506 to 540, 568 to 592, 662 to 773, and 822 to 855; these read MSNK…SMSK, SSAV…TSIS, PSRH…AKKP, DSES…ATRS, DQSS…APEY, ANDS…TSQI, and ANPY…EEPI. Residues 211–225 show a composition bias toward basic and acidic residues; it reads KDSDRSQTKNTHEET. Residues 376–385 are compositionally biased toward basic residues; sequence SRHHSHRKKE. The segment covering 574-586 has biased composition (basic residues); that stretch reads PGRHFGKTGRSHF. Residues 665–686 show a composition bias toward low complexity; sequence SPNSSESLESLNNQSYSSSPYS. Over residues 698–740 the composition is skewed to polar residues; sequence QSLNDSPQTSDFKASNLNDSSSNVHSIFQTRETTSPSVQNKTP. The segment covering 743–755 has biased composition (basic and acidic residues); the sequence is YHRELKSSKDGHE. Low complexity predominate over residues 758-773; the sequence is SPLVSSSPSGSFTSQI. Over residues 823–855 the composition is skewed to polar residues; the sequence is NPYSTNNDGNPSNNTSDVEVNETSMNDNSEEPI.

The protein localises to the cytoplasm. The protein resides in the vacuole membrane. This is an uncharacterized protein from Schizosaccharomyces pombe (strain 972 / ATCC 24843) (Fission yeast).